The sequence spans 363 residues: tRNA/tmRNA (uracil-C(5))-methyltransferase (363 aa).

S-adenosyl-L-methionine contacts are provided by Gln-187, Tyr-215, Asn-220, Glu-236, and Asp-296. The active-site Nucleophile is Cys-321. The active-site Proton acceptor is the Glu-355.

It belongs to the class I-like SAM-binding methyltransferase superfamily. RNA M5U methyltransferase family. TrmA subfamily.

It catalyses the reaction uridine(54) in tRNA + S-adenosyl-L-methionine = 5-methyluridine(54) in tRNA + S-adenosyl-L-homocysteine + H(+). The enzyme catalyses uridine(341) in tmRNA + S-adenosyl-L-methionine = 5-methyluridine(341) in tmRNA + S-adenosyl-L-homocysteine + H(+). Functionally, dual-specificity methyltransferase that catalyzes the formation of 5-methyluridine at position 54 (m5U54) in all tRNAs, and that of position 341 (m5U341) in tmRNA (transfer-mRNA). The protein is tRNA/tmRNA (uracil-C(5))-methyltransferase of Haemophilus influenzae (strain PittEE).